Here is a 149-residue protein sequence, read N- to C-terminus: uncharacterized protein (149 aa).

Residues 12–31 traverse the membrane as a helical segment; that stretch reads FKNLVIGAVSGVAAAYFLST.

It is found in the membrane. This is an uncharacterized protein from Streptococcus pyogenes serotype M6 (strain ATCC BAA-946 / MGAS10394).